The chain runs to 502 residues: Cytochrome P450 71A8 (502 aa).

A helical membrane pass occupies residues 16 to 36 (IISHTLAFQALVSLILLISIT). Residues 93 to 119 (PVSSRRRPRGNHENSRSRLRRPRGSRS) form a disordered region. Cys447 is a binding site for heme.

Belongs to the cytochrome P450 family. Requires heme as cofactor.

Its subcellular location is the membrane. In Mentha piperita (Peppermint), this protein is Cytochrome P450 71A8 (CYP71A8).